Reading from the N-terminus, the 612-residue chain is Alpha-glycerophosphate oxidase (612 aa).

Residue 21–49 (DLLIIGGGITGAGVALQAAASGLDTGLIE) participates in FAD binding. The segment covering 398–408 (VETSTSEKELD) has biased composition (basic and acidic residues). A disordered region spans residues 398-418 (VETSTSEKELDPSAVSRGSSF).

The protein belongs to the FAD-dependent glycerol-3-phosphate dehydrogenase family. FAD is required as a cofactor.

The protein localises to the cytoplasm. It catalyses the reaction sn-glycerol 3-phosphate + O2 = dihydroxyacetone phosphate + H2O2. The protein is Alpha-glycerophosphate oxidase (glpO) of Streptococcus pyogenes serotype M18 (strain MGAS8232).